A 369-amino-acid chain; its full sequence is Methionine import ATP-binding protein MetN 2 (369 aa).

In terms of domain architecture, ABC transporter spans 33–270 (VRFIGLGKTY…PRHEVTRTLL (238 aa)). 67–74 (GRSGAGKS) contacts ATP.

Belongs to the ABC transporter superfamily. Methionine importer (TC 3.A.1.24) family. The complex is composed of two ATP-binding proteins (MetN), two transmembrane proteins (MetI) and a solute-binding protein (MetQ).

It localises to the cell inner membrane. The catalysed reaction is L-methionine(out) + ATP + H2O = L-methionine(in) + ADP + phosphate + H(+). The enzyme catalyses D-methionine(out) + ATP + H2O = D-methionine(in) + ADP + phosphate + H(+). Part of the ABC transporter complex MetNIQ involved in methionine import. Responsible for energy coupling to the transport system. The chain is Methionine import ATP-binding protein MetN 2 from Pseudomonas putida (strain ATCC 47054 / DSM 6125 / CFBP 8728 / NCIMB 11950 / KT2440).